Reading from the N-terminus, the 129-residue chain is uncharacterized protein (129 aa).

A signal peptide spans Met1 to Gly21.

This is an uncharacterized protein from Oryza sativa subsp. japonica (Rice).